We begin with the raw amino-acid sequence, 444 residues long: MKSQSKRTSRLFVFVGVVVAIIIAVLSWRYFGTGSDNNTSGAQQSARGQDTSHGGRRNTPLAPVQAATATEQEVPRYLTGLGTVIAANTVTVTSRVDGELMALHFTEGQQVKAGDLLAEIDPRPYEVQLTQAQGQLAKDQATLDNARRDLARYQKLSKTGLISQQELDTQSSLVRQSEGSVKADQGAIDSAKLQLTYSRITAPISGRVGLKQVDVGNYITSGTATPIVVITQTHPVDVVFTLPESDIPAIMQAQKNAEKTHAIVPVEAWDRTNKQMLAQGYLLSIDNQIDTTTGTIKLKARFNNEDDVLFPNQFVNARIKVDLLQNAVVVPTAAVQMGSEGNFVWTLDDANKVSKHLVTTGIQNSQQVVIDAGLNAGQRVVTDGIDRLTEGVQVEVVTPRSANTDTNPASAEKAAAEAEGSTPHQGRGRPANAPARSTTAAEKS.

Positions 1 to 20 (MKSQSKRTSRLFVFVGVVVA) are cleaved as a signal peptide. Over residues 37–52 (NNTSGAQQSARGQDTS) the composition is skewed to polar residues. Disordered regions lie at residues 37-60 (NNTSGAQQSARGQDTSHGGRRNTP) and 398-444 (TPRS…AEKS). Residues 409 to 419 (ASAEKAAAEAE) show a composition bias toward low complexity. Over residues 435 to 444 (ARSTTAAEKS) the composition is skewed to polar residues.

It belongs to the membrane fusion protein (MFP) (TC 8.A.1) family. As to quaternary structure, part of a tripartite efflux system composed of MdtA, MdtB and MdtC.

It is found in the cell inner membrane. This chain is Multidrug resistance protein MdtA, found in Yersinia pseudotuberculosis serotype O:3 (strain YPIII).